The chain runs to 600 residues: NADH-ubiquinone oxidoreductase chain 5 (600 aa).

The next 16 membrane-spanning stretches (helical) occupy residues 1-21 (MYIL…LFGR), 27-47 (GAGI…LLIF), 81-101 (LTAV…IFST), 110-130 (VPRF…LVTS), 136-156 (LFIG…FWLT), 178-198 (FVLA…ASVF), 200-220 (IVAL…FIGA), 241-261 (TPVS…FLLI), 274-294 (LMVV…IGLV), 301-323 (VIAY…SQYS), 327-347 (FHLM…GSVI), 366-386 (IPFT…FPYL), 404-424 (YLAF…AYSL), 450-470 (WNLT…GYLT), 488-508 (SIKL…VVLY), and 520-540 (SPVG…NYII).

The protein belongs to the complex I subunit 5 family.

The protein resides in the mitochondrion inner membrane. It carries out the reaction a ubiquinone + NADH + 5 H(+)(in) = a ubiquinol + NAD(+) + 4 H(+)(out). In terms of biological role, core subunit of the mitochondrial membrane respiratory chain NADH dehydrogenase (Complex I) that is believed to belong to the minimal assembly required for catalysis. Complex I functions in the transfer of electrons from NADH to the respiratory chain. The immediate electron acceptor for the enzyme is believed to be ubiquinone. This Metridium senile (Brown sea anemone) protein is NADH-ubiquinone oxidoreductase chain 5 (ND5).